The following is a 228-amino-acid chain: Prepilin leader peptidase/N-methyltransferase (228 aa).

6 consecutive transmembrane segments (helical) span residues leucine 18–isoleucine 38, arginine 95–alanine 115, proline 116–isoleucine 136, leucine 147–leucine 167, alanine 168–phenylalanine 188, and leucine 204–alanine 224.

Belongs to the peptidase A24 family.

The protein resides in the cell inner membrane. The enzyme catalyses Typically cleaves a -Gly-|-Phe- bond to release an N-terminal, basic peptide of 5-8 residues from type IV prepilin, and then N-methylates the new N-terminal amino group, the methyl donor being S-adenosyl-L-methionine.. Its function is as follows. Plays an essential role in type IV pili and type II pseudopili formation by proteolytically removing the leader sequence from substrate proteins and subsequently monomethylating the alpha-amino group of the newly exposed N-terminal phenylalanine. This chain is Prepilin leader peptidase/N-methyltransferase (pulO), found in Klebsiella pneumoniae.